The following is a 380-amino-acid chain: N-acetylcysteine deacetylase (380 aa).

Cys-98, His-100, Glu-134, His-158, and His-350 together coordinate Ni(2+).

The protein belongs to the peptidase M20 family. A divalent metal cation serves as cofactor.

It carries out the reaction N-acetyl-L-cysteine + H2O = L-cysteine + acetate. The protein operates within amino-acid biosynthesis; L-cysteine biosynthesis. Functionally, probably catalyzes the deacetylation of N-acetylcysteine (NAC) to acetate and cysteine. Is involved in a S-(2-succino)cysteine (2SC) degradation pathway that allows B.subtilis to grow on 2SC as a sole sulfur source, via its metabolization to cysteine. In Bacillus subtilis (strain 168), this protein is N-acetylcysteine deacetylase.